A 515-amino-acid chain; its full sequence is Maturase K (515 aa).

The protein belongs to the intron maturase 2 family. MatK subfamily.

It localises to the plastid. Its subcellular location is the chloroplast. Functionally, usually encoded in the trnK tRNA gene intron. Probably assists in splicing its own and other chloroplast group II introns. The protein is Maturase K of Picea abies (Norway spruce).